Reading from the N-terminus, the 123-residue chain is uncharacterized protein (123 aa).

Residues 5–25 (GTLVIIFAIVLILCIMLLFFY) traverse the membrane as a helical segment. The interval 32-53 (KPSVLPPPIPPPTPPPSKKKYD) is disordered. Residues 35 to 47 (VLPPPIPPPTPPP) are compositionally biased toward pro residues.

It belongs to the asfivirus CP123L family.

The protein localises to the host membrane. The protein resides in the virion. This is an uncharacterized protein from Ornithodoros (relapsing fever ticks).